The following is a 469-amino-acid chain: 2-oxoisovalerate dehydrogenase subunit beta, mitochondrial (469 aa).

The transit peptide at 1-40 (MKRSTVVIRPSARALSRQASSQSFLLARSSALTSRQRRLY) directs the protein to the mitochondrion. Residue Y167 coordinates thiamine diphosphate. Positions 194, 196, and 197 each coordinate K(+).

In terms of assembly, heterotetramer of 2 alpha and 2 beta chains. It depends on thiamine diphosphate as a cofactor.

It localises to the mitochondrion matrix. The catalysed reaction is N(6)-[(R)-lipoyl]-L-lysyl-[protein] + 3-methyl-2-oxobutanoate + H(+) = N(6)-[(R)-S(8)-2-methylpropanoyldihydrolipoyl]-L-lysyl-[protein] + CO2. Functionally, the branched-chain alpha-keto dehydrogenase complex catalyzes the overall conversion of alpha-keto acids to acyl-CoA and CO(2). It contains multiple copies of three enzymatic components: branched-chain alpha-keto acid decarboxylase (E1), lipoamide acyltransferase (E2) and lipoamide dehydrogenase (E3). The sequence is that of 2-oxoisovalerate dehydrogenase subunit beta, mitochondrial from Chaetomium thermophilum (strain DSM 1495 / CBS 144.50 / IMI 039719) (Thermochaetoides thermophila).